Here is a 1077-residue protein sequence, read N- to C-terminus: Response regulator SSK1 (1077 aa).

In terms of domain architecture, Response regulatory spans 854 to 1000 (NVLIVEDNII…FLERKVMEWG (147 aa)). Position 903 is a 4-aspartylphosphate (aspartate 903).

Belongs to the SSK1 family.

Its subcellular location is the cytoplasm. Functionally, two-domain response regulator protein in the two-component signal transduction system of the HOG1 pathway. Involved in multi-stress responses and is essential for conidiation, secondary metabolism, autophagy and endocyrosis. In addition, regulates mycelial growth, cell nucleus development, septum formation, and organelle development. Also regulates trap formation and thus plays a crucial role in pathogenicity. The polypeptide is Response regulator SSK1 (Arthrobotrys oligospora (strain ATCC 24927 / CBS 115.81 / DSM 1491) (Nematode-trapping fungus)).